Reading from the N-terminus, the 241-residue chain is UDP-2,3-diacylglucosamine hydrolase (241 aa).

Mn(2+)-binding residues include Asp-8, His-10, Asp-41, Asn-79, and His-114. Substrate is bound at residue 79 to 80 (NR). Substrate is bound by residues Asp-122, Lys-164, Lys-167, and His-195. The Mn(2+) site is built by His-195 and His-197.

Belongs to the LpxH family. It depends on Mn(2+) as a cofactor.

It localises to the cell inner membrane. The enzyme catalyses UDP-2-N,3-O-bis[(3R)-3-hydroxytetradecanoyl]-alpha-D-glucosamine + H2O = 2-N,3-O-bis[(3R)-3-hydroxytetradecanoyl]-alpha-D-glucosaminyl 1-phosphate + UMP + 2 H(+). Its pathway is glycolipid biosynthesis; lipid IV(A) biosynthesis; lipid IV(A) from (3R)-3-hydroxytetradecanoyl-[acyl-carrier-protein] and UDP-N-acetyl-alpha-D-glucosamine: step 4/6. Functionally, hydrolyzes the pyrophosphate bond of UDP-2,3-diacylglucosamine to yield 2,3-diacylglucosamine 1-phosphate (lipid X) and UMP by catalyzing the attack of water at the alpha-P atom. Involved in the biosynthesis of lipid A, a phosphorylated glycolipid that anchors the lipopolysaccharide to the outer membrane of the cell. In Aliivibrio fischeri (strain MJ11) (Vibrio fischeri), this protein is UDP-2,3-diacylglucosamine hydrolase.